Consider the following 633-residue polypeptide: Threonine--tRNA ligase (633 aa).

The region spanning 1 to 59 (MIRITFSAEQKVKEYSGKVTGFDILQPDVLKEAIAFKVNGELHDLSREIEADAEIEVIQ) is the TGS domain. The tract at residues 240–532 (DHRKIAKDMD…LIENYAGKFP (293 aa)) is catalytic. 3 residues coordinate Zn(2+): cysteine 332, histidine 383, and histidine 509.

It belongs to the class-II aminoacyl-tRNA synthetase family. As to quaternary structure, homodimer. Zn(2+) is required as a cofactor.

It localises to the cytoplasm. It catalyses the reaction tRNA(Thr) + L-threonine + ATP = L-threonyl-tRNA(Thr) + AMP + diphosphate + H(+). Catalyzes the attachment of threonine to tRNA(Thr) in a two-step reaction: L-threonine is first activated by ATP to form Thr-AMP and then transferred to the acceptor end of tRNA(Thr). Also edits incorrectly charged L-seryl-tRNA(Thr). The polypeptide is Threonine--tRNA ligase (Wolbachia sp. subsp. Drosophila simulans (strain wRi)).